Consider the following 274-residue polypeptide: MKPMKTSWADEVEADYVDGLPPTKEYTQGNLKFVAEYKYNEDGKKVKVVRTYKIQKQTVPKVVARRRNWSKFGDSRLDKPGPCSQTTMVAEEVHMVFISSKELEQAQAQEPQMEPGKNIARCRICNGEHWSVNCPYKGTSMDSKTLMESKATAAAAAAVSDASKTGKYVSPFLKEGGCAIGGGIGAKPWVRERSAVRISNLSESMTEADLEELVKKIGPHTKLYLAREKNTGLCKGFAYVHFKFRQDAAAAIEILNGHGYDHLILCVEWSKPQP.

The RRM domain maps to 194-272; the sequence is SAVRISNLSE…LILCVEWSKP (79 aa).

This sequence belongs to the eIF-3 subunit G family. In terms of assembly, component of the eukaryotic translation initiation factor 3 (eIF-3) complex. The eIF-3 complex interacts with pix.

It is found in the cytoplasm. Functionally, RNA-binding component of the eukaryotic translation initiation factor 3 (eIF-3) complex, which is involved in protein synthesis of a specialized repertoire of mRNAs and, together with other initiation factors, stimulates binding of mRNA and methionyl-tRNAi to the 40S ribosome. The eIF-3 complex specifically targets and initiates translation of a subset of mRNAs involved in cell proliferation. This subunit can bind 18S rRNA. The sequence is that of Eukaryotic translation initiation factor 3 subunit G-2 from Drosophila pseudoobscura pseudoobscura (Fruit fly).